The sequence spans 872 residues: Bifunctional heparan sulfate N-deacetylase/N-sulfotransferase 4 (872 aa).

The Cytoplasmic segment spans residues 1-13 (MNLILKFRRSFRT). The helical; Signal-anchor for type II membrane protein transmembrane segment at 14 to 34 (LIVLLATFCLVSILISAYFLY) threads the bilayer. Residues 35–872 (SGYKQEMTLI…WLRQELQKVR (838 aa)) are Lumenal-facing. Residues 36 to 588 (GYKQEMTLIE…KRHKDIWSRE (553 aa)) form a heparan sulfate N-deacetylase 4 region. Residues Asn226, Asn341, and Asn391 are each glycosylated (N-linked (GlcNAc...) asparagine). Residues 589 to 872 (KTCDHLPKFL…WLRQELQKVR (284 aa)) are heparan sulfate N-sulfotransferase 4. The For sulfotransferase activity role is filled by Lys604. 604–608 (KTGTT) is a binding site for 3'-phosphoadenylyl sulfate. The N-linked (GlcNAc...) asparagine glycan is linked to Asn657. 3'-phosphoadenylyl sulfate is bound at residue Ser702. Asn793 is a glycosylation site (N-linked (GlcNAc...) asparagine). Cys808 and Cys818 are oxidised to a cystine. Position 823–827 (823–827 (KGRKY)) interacts with 3'-phosphoadenylyl sulfate.

Belongs to the sulfotransferase 1 family. NDST subfamily. As to quaternary structure, monomer. In terms of tissue distribution, expressed at low level in brain and throughout embryogenesis. Not expressed in other tissues.

It is found in the golgi apparatus membrane. It carries out the reaction alpha-D-glucosaminyl-[heparan sulfate](n) + 3'-phosphoadenylyl sulfate = N-sulfo-alpha-D-glucosaminyl-[heparan sulfate](n) + adenosine 3',5'-bisphosphate + 2 H(+). It functions in the pathway glycan metabolism; heparan sulfate biosynthesis. The protein operates within glycan metabolism; heparin biosynthesis. In terms of biological role, essential bifunctional enzyme that catalyzes both the N-deacetylation and the N-sulfation of glucosamine (GlcNAc) of the glycosaminoglycan in heparan sulfate. Modifies the GlcNAc-GlcA disaccharide repeating sugar backbone to make N-sulfated heparosan, a prerequisite substrate for later modifications in heparin biosynthesis. Has low deacetylase activity but high sulfotransferase activity. This Mus musculus (Mouse) protein is Bifunctional heparan sulfate N-deacetylase/N-sulfotransferase 4 (Ndst4).